The following is a 1060-amino-acid chain: Protein FAM184B (1060 aa).

Over residues 1–17 (MASALNSKINPPGTCQG) the composition is skewed to polar residues. A disordered region spans residues 1-24 (MASALNSKINPPGTCQGSKADGGA). A coiled-coil region spans residues 51 to 159 (ALNTRQDEAE…EMLELKADYE (109 aa)). Positions 165–191 (LTSHEATPQGRLPQESPETKSEPGQGP) are disordered. 2 coiled-coil regions span residues 192 to 333 (EMQE…DRMM) and 402 to 502 (MKQQ…RLEE). Disordered stretches follow at residues 532–566 (QDPC…EERT), 681–700 (TEER…HQTH), and 762–803 (GRQQ…GSGE). Basic and acidic residues-rich tracts occupy residues 536-554 (LKLD…KLAA), 681-690 (TEERLKKESS), and 773-785 (DSKD…EERG). Residues 584 to 769 (LKEKTSKIQR…ALGRQQASSQ (186 aa)) adopt a coiled-coil conformation. Residues 806–934 (GLWEENAQLQ…KQLTEERRFH (129 aa)) are a coiled coil. Composition is skewed to polar residues over residues 994 to 1009 (SRIN…SLDP) and 1018 to 1030 (KPNQ…TATR). Positions 994 to 1050 (SRINAPPITTSPSLDPSPSCGRTYKPNQSTDAKTATRTPDGETAQAKEVQQKQGSPH) are disordered.

The protein belongs to the FAM184 family.

This Homo sapiens (Human) protein is Protein FAM184B (FAM184B).